The chain runs to 228 residues: UPF0173 metal-dependent hydrolase lin1612 (228 aa).

It belongs to the UPF0173 family.

The polypeptide is UPF0173 metal-dependent hydrolase lin1612 (Listeria innocua serovar 6a (strain ATCC BAA-680 / CLIP 11262)).